A 278-amino-acid chain; its full sequence is MQIMLCAISNIASGNCSEDCKYCTQSAHVKTDIQKYRRKELSQIVLEAKMAKKNEALGFCLVTAGLGLDDEKLEYVCEAAKAVQKEVPNLLLIACNGMASVEQLKELKKAGIFSYNHNLETSKEFFPQICTTHTWESRFQTNLNAKEAGLMLCCGGIYGMGESEEDRLSFRKSLQELQPFSTPINFFIANENLKLQVPRLNADEALKIVRDTKEALPQSVVMVAGGREVVLRERQYEIFQAGAGAIVIGDYLTTKGEEPSQDIIKLKEMGFTFASECH.

A Radical SAM core domain is found at 1-227 (MQIMLCAISN…QSVVMVAGGR (227 aa)). [4Fe-4S] cluster is bound by residues Cys16, Cys20, and Cys23. The [2Fe-2S] cluster site is built by Cys60, Cys95, and Cys153.

This sequence belongs to the radical SAM superfamily. Biotin synthase family. Homodimer. Requires [4Fe-4S] cluster as cofactor. The cofactor is [2Fe-2S] cluster.

The catalysed reaction is (4R,5S)-dethiobiotin + (sulfur carrier)-SH + 2 reduced [2Fe-2S]-[ferredoxin] + 2 S-adenosyl-L-methionine = (sulfur carrier)-H + biotin + 2 5'-deoxyadenosine + 2 L-methionine + 2 oxidized [2Fe-2S]-[ferredoxin]. It functions in the pathway cofactor biosynthesis; biotin biosynthesis; biotin from 7,8-diaminononanoate: step 2/2. In terms of biological role, catalyzes the conversion of dethiobiotin (DTB) to biotin by the insertion of a sulfur atom into dethiobiotin via a radical-based mechanism. The protein is Biotin synthase of Campylobacter jejuni subsp. jejuni serotype O:23/36 (strain 81-176).